The chain runs to 408 residues: Argininosuccinate synthase (408 aa).

Residues 10-18 (AYSGGLDTS) and A37 contribute to the ATP site. Y90 and S95 together coordinate L-citrulline. G120 serves as a coordination point for ATP. Residues T122, N126, and D127 each coordinate L-aspartate. N126 provides a ligand contact to L-citrulline. R130, S182, S191, E267, and Y279 together coordinate L-citrulline.

This sequence belongs to the argininosuccinate synthase family. Type 1 subfamily. In terms of assembly, homotetramer.

The protein localises to the cytoplasm. It carries out the reaction L-citrulline + L-aspartate + ATP = 2-(N(omega)-L-arginino)succinate + AMP + diphosphate + H(+). The protein operates within amino-acid biosynthesis; L-arginine biosynthesis; L-arginine from L-ornithine and carbamoyl phosphate: step 2/3. In Paraburkholderia phytofirmans (strain DSM 17436 / LMG 22146 / PsJN) (Burkholderia phytofirmans), this protein is Argininosuccinate synthase.